Consider the following 261-residue polypeptide: tRNA U34 carboxymethyltransferase (261 aa).

Residues Lys-25, Trp-39, Lys-44, Gly-63, 114–115, Tyr-135, and Arg-250 each bind carboxy-S-adenosyl-L-methionine; that span reads VE.

This sequence belongs to the class I-like SAM-binding methyltransferase superfamily. CmoB family. In terms of assembly, homotetramer.

It carries out the reaction carboxy-S-adenosyl-L-methionine + 5-hydroxyuridine(34) in tRNA = 5-carboxymethoxyuridine(34) in tRNA + S-adenosyl-L-homocysteine + H(+). Its function is as follows. Catalyzes carboxymethyl transfer from carboxy-S-adenosyl-L-methionine (Cx-SAM) to 5-hydroxyuridine (ho5U) to form 5-carboxymethoxyuridine (cmo5U) at position 34 in tRNAs. In Helicobacter pylori (strain ATCC 700392 / 26695) (Campylobacter pylori), this protein is tRNA U34 carboxymethyltransferase.